The following is an 88-amino-acid chain: Phosphocarrier protein HPr (88 aa).

An HPr domain is found at 1 to 88; it reads MEQKSYVIID…DILSKEGLTK (88 aa). The active-site Pros-phosphohistidine intermediate is histidine 15. A Phosphoserine; by HPrK/P modification is found at serine 46.

The protein belongs to the HPr family.

The protein localises to the cytoplasm. With respect to regulation, phosphorylation on Ser-46 inhibits the phosphoryl transfer from enzyme I to HPr. In terms of biological role, general (non sugar-specific) component of the phosphoenolpyruvate-dependent sugar phosphotransferase system (sugar PTS). This major carbohydrate active-transport system catalyzes the phosphorylation of incoming sugar substrates concomitantly with their translocation across the cell membrane. The phosphoryl group from phosphoenolpyruvate (PEP) is transferred to the phosphoryl carrier protein HPr by enzyme I. Phospho-HPr then transfers it to the PTS EIIA domain. The polypeptide is Phosphocarrier protein HPr (ptsH) (Staphylococcus xylosus).